Consider the following 495-residue polypeptide: Putative myristoylated membrane protein 458R (495 aa).

Residue Gly2 is the site of N-myristoyl glycine; by host attachment. Asn58, Asn71, Asn72, Asn103, and Asn111 each carry an N-linked (GlcNAc...) asparagine; by host glycan. Residues 150–182 (HLKEIHKIITKEVENAKNNNKDVTKLIEQFSQA) are a coiled coil. Helical transmembrane passes span 194 to 214 (ILSLIIFSTAFLGLGGVYVGG) and 216 to 236 (IAFPVTLLLSILAFYQYFNWT). N-linked (GlcNAc...) asparagine; by host glycans are attached at residues Asn262, Asn314, Asn317, Asn349, and Asn457. Residues 469 to 489 (LWLLCVAVILLFIGIIGMGLG) form a helical membrane-spanning segment.

It belongs to the IIV-6 118L/458R family.

It is found in the membrane. This chain is Putative myristoylated membrane protein 458R, found in Acheta domesticus (House cricket).